Consider the following 224-residue polypeptide: Cytidylate kinase (224 aa).

Residue glycine 11–threonine 19 coordinates ATP.

It belongs to the cytidylate kinase family. Type 1 subfamily.

The protein localises to the cytoplasm. It catalyses the reaction CMP + ATP = CDP + ADP. The catalysed reaction is dCMP + ATP = dCDP + ADP. This chain is Cytidylate kinase, found in Listeria welshimeri serovar 6b (strain ATCC 35897 / DSM 20650 / CCUG 15529 / CIP 8149 / NCTC 11857 / SLCC 5334 / V8).